Consider the following 363-residue polypeptide: Chorismate synthase (363 aa).

Arginine 48 and arginine 54 together coordinate NADP(+). FMN is bound by residues 125–127 (RSS), 237–238 (NA), glycine 277, 292–296 (KPTSS), and arginine 318.

This sequence belongs to the chorismate synthase family. In terms of assembly, homotetramer. FMNH2 is required as a cofactor.

It catalyses the reaction 5-O-(1-carboxyvinyl)-3-phosphoshikimate = chorismate + phosphate. It participates in metabolic intermediate biosynthesis; chorismate biosynthesis; chorismate from D-erythrose 4-phosphate and phosphoenolpyruvate: step 7/7. In terms of biological role, catalyzes the anti-1,4-elimination of the C-3 phosphate and the C-6 proR hydrogen from 5-enolpyruvylshikimate-3-phosphate (EPSP) to yield chorismate, which is the branch point compound that serves as the starting substrate for the three terminal pathways of aromatic amino acid biosynthesis. This reaction introduces a second double bond into the aromatic ring system. The chain is Chorismate synthase from Pseudomonas putida (strain ATCC 700007 / DSM 6899 / JCM 31910 / BCRC 17059 / LMG 24140 / F1).